The sequence spans 567 residues: Oxygen-dependent choline dehydrogenase (567 aa).

An FAD-binding site is contributed by 6-35 (DYIIVGAGSAGNTLATRLTEDEGVTVLLLE). His-475 acts as the Proton acceptor in catalysis.

Belongs to the GMC oxidoreductase family. Requires FAD as cofactor.

The enzyme catalyses choline + A = betaine aldehyde + AH2. It carries out the reaction betaine aldehyde + NAD(+) + H2O = glycine betaine + NADH + 2 H(+). It functions in the pathway amine and polyamine biosynthesis; betaine biosynthesis via choline pathway; betaine aldehyde from choline (cytochrome c reductase route): step 1/1. Involved in the biosynthesis of the osmoprotectant glycine betaine. Catalyzes the oxidation of choline to betaine aldehyde and betaine aldehyde to glycine betaine at the same rate. In Pseudomonas fluorescens (strain Pf0-1), this protein is Oxygen-dependent choline dehydrogenase.